The following is a 368-amino-acid chain: Agmatine deiminase (368 aa).

Cys-357 functions as the Amidino-cysteine intermediate in the catalytic mechanism.

This sequence belongs to the agmatine deiminase family. As to quaternary structure, homodimer.

It catalyses the reaction agmatine + H2O = N-carbamoylputrescine + NH4(+). The protein operates within amine and polyamine biosynthesis; putrescine biosynthesis via agmatine pathway; N-carbamoylputrescine from agmatine: step 1/1. Its function is as follows. Mediates the hydrolysis of agmatine into N-carbamoylputrescine in the arginine decarboxylase (ADC) pathway of putrescine biosynthesis, a basic polyamine. The polypeptide is Agmatine deiminase (Ectopseudomonas mendocina (strain ymp) (Pseudomonas mendocina)).